Reading from the N-terminus, the 675-residue chain is DNA ligase (675 aa).

Residues 43 to 47 (DYEYD), 92 to 93 (SM), and glutamate 122 contribute to the NAD(+) site. Lysine 124 (N6-AMP-lysine intermediate) is an active-site residue. Arginine 145, glutamate 179, lysine 295, and lysine 319 together coordinate NAD(+). Cysteine 413, cysteine 416, cysteine 431, and cysteine 436 together coordinate Zn(2+). Positions 597 to 675 (SPDGYYKGKK…ETEAIAKFEQ (79 aa)) constitute a BRCT domain.

It belongs to the NAD-dependent DNA ligase family. LigA subfamily. Mg(2+) is required as a cofactor. Requires Mn(2+) as cofactor.

It carries out the reaction NAD(+) + (deoxyribonucleotide)n-3'-hydroxyl + 5'-phospho-(deoxyribonucleotide)m = (deoxyribonucleotide)n+m + AMP + beta-nicotinamide D-nucleotide.. Functionally, DNA ligase that catalyzes the formation of phosphodiester linkages between 5'-phosphoryl and 3'-hydroxyl groups in double-stranded DNA using NAD as a coenzyme and as the energy source for the reaction. It is essential for DNA replication and repair of damaged DNA. In Pediococcus pentosaceus (strain ATCC 25745 / CCUG 21536 / LMG 10740 / 183-1w), this protein is DNA ligase.